The sequence spans 89 residues: MERTVTVVPEDGLHARPASKFVETANKFDADVQLGRADEDDLVPAASMLAVTGLGVGHDESVRLVAEGDDAEAALDALEDILSTPEAKQ.

The region spanning 1 to 89 (MERTVTVVPE…DILSTPEAKQ (89 aa)) is the HPr domain. Histidine 14 functions as the Pros-phosphohistidine intermediate in the catalytic mechanism. Serine 47 carries the post-translational modification Phosphoserine; by HPrK/P.

Belongs to the HPr family.

Its subcellular location is the cytoplasm. Phosphorylation on Ser-47 inhibits the phosphoryl transfer from enzyme I to HPr. In terms of biological role, general (non sugar-specific) component of the phosphoenolpyruvate-dependent sugar phosphotransferase system (sugar PTS). This major carbohydrate active-transport system catalyzes the phosphorylation of incoming sugar substrates concomitantly with their translocation across the cell membrane. The phosphoryl group from phosphoenolpyruvate (PEP) is transferred to the phosphoryl carrier protein HPr by enzyme I. Phospho-HPr then transfers it to the PTS EIIA domain. Is involved in fructose transport. The sequence is that of Phosphocarrier protein HPr (ptsH1) from Haloferax volcanii (strain ATCC 29605 / DSM 3757 / JCM 8879 / NBRC 14742 / NCIMB 2012 / VKM B-1768 / DS2) (Halobacterium volcanii).